A 177-amino-acid polypeptide reads, in one-letter code: Large ribosomal subunit protein uL6 (177 aa).

The interval 154 to 177 (PEPYKGKGVRYADEQVRRKEAKKK) is disordered. Residues 155 to 171 (EPYKGKGVRYADEQVRR) are compositionally biased toward basic and acidic residues.

It belongs to the universal ribosomal protein uL6 family. In terms of assembly, part of the 50S ribosomal subunit.

Its function is as follows. This protein binds to the 23S rRNA, and is important in its secondary structure. It is located near the subunit interface in the base of the L7/L12 stalk, and near the tRNA binding site of the peptidyltransferase center. This is Large ribosomal subunit protein uL6 from Alcanivorax borkumensis (strain ATCC 700651 / DSM 11573 / NCIMB 13689 / SK2).